The sequence spans 258 residues: Neurotrophin-3 (258 aa).

Residues 1 to 18 (MSILFYVIFLAYLRGIQG) form the signal peptide. Positions 19 to 139 (NNMDQRSLPE…TNRTSPRRKR (121 aa)) are excised as a propeptide. The interval 60–85 (QSTLPKAEAPREPEQGEATRSEFQPM) is disordered. A compositionally biased stretch (basic and acidic residues) spans 67–79 (EAPREPEQGEATR). An N-linked (GlcNAc...) asparagine glycan is attached at Asn131. 3 disulfides stabilise this stretch: Cys153/Cys218, Cys196/Cys247, and Cys206/Cys249.

It belongs to the NGF-beta family. Brain and peripheral tissues.

The protein localises to the secreted. Seems to promote the survival of visceral and proprioceptive sensory neurons. The protein is Neurotrophin-3 (Ntf3) of Rattus norvegicus (Rat).